The primary structure comprises 312 residues: tRNA uridine(34) hydroxylase (312 aa).

Residues 130–225 enclose the Rhodanese domain; it reads RGDDVVFFDG…YGEKYGNDGL (96 aa). The Cysteine persulfide intermediate role is filled by Cys185.

Belongs to the TrhO family.

It carries out the reaction uridine(34) in tRNA + AH2 + O2 = 5-hydroxyuridine(34) in tRNA + A + H2O. Catalyzes oxygen-dependent 5-hydroxyuridine (ho5U) modification at position 34 in tRNAs. In Corynebacterium diphtheriae (strain ATCC 700971 / NCTC 13129 / Biotype gravis), this protein is tRNA uridine(34) hydroxylase.